Reading from the N-terminus, the 447-residue chain is Adenylosuccinate synthetase (447 aa).

GTP contacts are provided by residues 35 to 41 (GDEGKGK) and 63 to 65 (GHT). The active-site Proton acceptor is the Asp-36. Mg(2+)-binding residues include Asp-36 and Gly-63. Residues 36–39 (DEGK), 61–64 (NAGH), Thr-153, Arg-167, Asn-245, Thr-260, and Arg-324 contribute to the IMP site. His-64 serves as the catalytic Proton donor. 320–326 (VTTKRKR) is a binding site for substrate. GTP contacts are provided by residues Arg-326, 352–354 (KLD), and 435–437 (GVG).

Belongs to the adenylosuccinate synthetase family. In terms of assembly, homodimer. The cofactor is Mg(2+).

The protein resides in the cytoplasm. It carries out the reaction IMP + L-aspartate + GTP = N(6)-(1,2-dicarboxyethyl)-AMP + GDP + phosphate + 2 H(+). Its pathway is purine metabolism; AMP biosynthesis via de novo pathway; AMP from IMP: step 1/2. Its function is as follows. Plays an important role in the de novo pathway and in the salvage pathway of purine nucleotide biosynthesis. Catalyzes the first committed step in the biosynthesis of AMP from IMP. In Drosophila sechellia (Fruit fly), this protein is Adenylosuccinate synthetase.